A 321-amino-acid polypeptide reads, in one-letter code: MATH domain and coiled-coil domain-containing protein At3g58410 (321 aa).

An MATH domain is found at 6–128 (GKKFAWVIKN…NGELMIVAEV (123 aa)). The stretch at 255 to 310 (KVDWLEKKLDQVRDKKEKERSCLAKLQETEETLLKLKQKCTELDALMDTEKAELSA) forms a coiled coil.

This Arabidopsis thaliana (Mouse-ear cress) protein is MATH domain and coiled-coil domain-containing protein At3g58410.